A 99-amino-acid chain; its full sequence is DNA-binding protein HmvA (99 aa).

Positions 52–55 are interaction with DNA; the sequence is KTIK.

The protein belongs to the archaeal histone HMF family. As to quaternary structure, homodimer or heterodimer with another histone. Dimers then assemble into higher oligomers, with the DNA wrapped around the protein core.

Its subcellular location is the cytoplasm. The protein localises to the chromosome. Its function is as follows. Binds and compact DNA (95 to 150 base pairs) to form nucleosome-like structures that contain positive DNA supercoils. Increases the resistance of DNA to thermal denaturation (in vitro). The protein is DNA-binding protein HmvA (hmvA) of Methanococcus voltae.